Consider the following 144-residue polypeptide: Small ribosomal subunit protein eS19 (144 aa).

This sequence belongs to the eukaryotic ribosomal protein eS19 family.

This Argopecten irradians (Bay scallop) protein is Small ribosomal subunit protein eS19 (RPS19).